The sequence spans 1070 residues: Duffy receptor gamma form (1070 aa).

Positions 1–21 are cleaved as a signal peptide; the sequence is MEGKKKRPLFFLLVLLLSHKA. Topologically, residues 22–1003 are extracellular; the sequence is NNVLFERMNG…SYECFTKGSS (982 aa). Asn-134 and Asn-179 each carry an N-linked (GlcNAc...) asparagine glycan. 2 disulfides stabilise this stretch: Cys-214–Cys-243 and Cys-227–Cys-234. Positions 279-281 match the Cell attachment site motif; that stretch reads RGD. 4 disulfides stabilise this stretch: Cys-296–Cys-372, Cys-410–Cys-427, Cys-422–Cys-502, and Cys-431–Cys-500. The disordered stretch occupies residues 518–912; sequence VGSGVESKAP…LNNRKLNRDQ (395 aa). A compositionally biased stretch (polar residues) spans 526-541; that stretch reads APSSNPINEAVKSSSG. 3 stretches are compositionally biased toward basic and acidic residues: residues 544-559, 672-707, and 714-731; these read KVQE…EGEG, GEVH…DDRS, and HTDE…KDTE. An N-linked (GlcNAc...) asparagine glycan is attached at Asn-676. Over residues 732-763 the composition is skewed to polar residues; that stretch reads TTGGSTLTPEQNVSVASDNGNVPGSGNKQNEG. A glycan (N-linked (GlcNAc...) asparagine) is linked at Asn-743. Residues 766–776 are compositionally biased toward low complexity; sequence ALSGAESLESS. Asn-785 is a glycosylation site (N-linked (GlcNAc...) asparagine). Residues 796-807 show a composition bias toward basic and acidic residues; that stretch reads GNEKDFQKHDFM. Residues 814–863 show a composition bias toward low complexity; that stretch reads DQTSSDHTSSDQTSSDQTSSDQTSSDQTSSDQTSSDQTSSDQTSSDQTID. Residues 864–888 show a composition bias toward basic and acidic residues; that stretch reads TEGHHRDNVRNPEIKSSEDMSKGDF. Residues 890 to 906 show a composition bias toward polar residues; it reads RNSNSNELYSHNNLNNR. Residue Asn-936 is glycosylated (N-linked (GlcNAc...) asparagine). The chain crosses the membrane as a helical span at residues 1004–1025; it reads TGIVYFATGGAFLIILLLFASW. Over 1026-1070 the chain is Cytoplasmic; sequence NAASNDYEEEATFDEFEEYCYNIHRTPQMPNDIEHMQQFTPLDYS.

It is found in the membrane. Functionally, binds to Neu5Gc-sialylated receptors on macaque erythrocytes. The protein is Duffy receptor gamma form of Plasmodium knowlesi.